The chain runs to 319 residues: MQVTFLGTSSGVPTRARNVSAVALRLPQRSEMWLFDCGEGTQHQFLRSELRLSQLRRVFVTHMHGDHVFGLPGLLASLGLAGNSNEGVDLYGPDPLESYLNGVLRTSSTRIGYPLKVHRVHDCAENGTLVYEDDDLMVRCTPLTHRVPAYAYRVDQKPLAGRFDIAKAKDLQIPPGPIYAQLKRGDTVTLEDGRVIDGTTLCGPERPGVSVVYCTDTVFCEAAVDLAQGADLLIHESTFAHQESEMAYQKQHSTSTMAAQTAAEANVGQLVLTHLSPRYAPGNAVTPEDLLKEAQAIFPNTCLAKDFLTLEVKPRCNSL.

Zn(2+) contacts are provided by histidine 62, histidine 64, aspartate 66, histidine 67, histidine 145, aspartate 216, and histidine 274. The active-site Proton acceptor is the aspartate 66.

This sequence belongs to the RNase Z family. As to quaternary structure, homodimer. Zn(2+) serves as cofactor.

It catalyses the reaction Endonucleolytic cleavage of RNA, removing extra 3' nucleotides from tRNA precursor, generating 3' termini of tRNAs. A 3'-hydroxy group is left at the tRNA terminus and a 5'-phosphoryl group is left at the trailer molecule.. Its function is as follows. Zinc phosphodiesterase, which displays some tRNA 3'-processing endonuclease activity. Probably involved in tRNA maturation, by removing a 3'-trailer from precursor tRNA. In Synechococcus sp. (strain CC9902), this protein is Ribonuclease Z.